The chain runs to 86 residues: RNA-binding protein Hfq (86 aa).

The region spanning 9–68 (DPYLNTLRKEKVGVSIYLVNGIKLQGTIESFDQFVILLKNTVSQMVYKHAISTVVPVRPI) is the Sm domain.

Belongs to the Hfq family. In terms of assembly, homohexamer.

RNA chaperone that binds small regulatory RNA (sRNAs) and mRNAs to facilitate mRNA translational regulation in response to envelope stress, environmental stress and changes in metabolite concentrations. Also binds with high specificity to tRNAs. The sequence is that of RNA-binding protein Hfq from Pseudomonas fluorescens (strain Pf0-1).